Consider the following 122-residue polypeptide: UPF0102 protein VV1_0590 (122 aa).

It belongs to the UPF0102 family.

In Vibrio vulnificus (strain CMCP6), this protein is UPF0102 protein VV1_0590.